A 214-amino-acid polypeptide reads, in one-letter code: Small ribosomal subunit protein eS6 (214 aa).

This sequence belongs to the eukaryotic ribosomal protein eS6 family.

The sequence is that of Small ribosomal subunit protein eS6 (rps6e) from Saccharolobus islandicus (strain Y.G.57.14 / Yellowstone #1) (Sulfolobus islandicus).